A 380-amino-acid polypeptide reads, in one-letter code: Deoxyguanosinetriphosphate triphosphohydrolase-like protein (380 aa).

Positions 79-196 (RLTHTLEVQQ…VDAADALAYT (118 aa)) constitute an HD domain.

The protein belongs to the dGTPase family. Type 2 subfamily.

The protein is Deoxyguanosinetriphosphate triphosphohydrolase-like protein of Deinococcus deserti (strain DSM 17065 / CIP 109153 / LMG 22923 / VCD115).